A 703-amino-acid chain; its full sequence is MSSFLDILGDGHVNFEKCGDVVVSPKDNMVAMLCHFCKDIFTHLPEFMRHLQWSHSDVLQFTKEQNVYRVEELMSLESSEDDVQSQANSCSSGDSGLAGEMEDADGEPGSSECLANNVEIMNALAAFDVDVDVLNNVSHEQSYSKNPPDSRTEGFRCARKPGRVEKPPSICDLKSYNITRHSRKREAIKQRLSSVKKRIMRSLENDVSKPRLNKLRSKLNNSLSSNISGPPKQSKMPSLLENSSVNELPAVLESTNPPSFDSEQPYVVSTTIKPSIRPCPSRTAVQTDRNISHQPVARRSTVNIERVDILPPINIKQKMKMSAKDIPFWESIIISSVASQQPSELNTTNNAVDQPPKRPERRSSLTVISSSPIQAMKPMRRSSMTRENTSPESSRILRSGEVESPAKANKRTKDSFEETSSSNEKGNAKRSKLEQNRCSMNFSLSASVTEYIRSDLKTSKLDLDSLLRLTEPLESDAFENTLVEDQVKNATKMGSPQKEFTKLQIGVKPEMEALKEDLRLLKTVGLLVLKDSCFEDKLPFEQSESFRKTAAKFSKIYHTYDTIWSYRKTKTIGVHQRLTEQLNSFTEEVNREIDCHLTTNEIKRILNLINSWYAYQIDQRFFRKATLSYSVEHYMFLFHFLPKINPTVYFCECCEEIFPNEARYKKHVQSVHAVHAFTCSECGKSFKRLYFYDKHLKTVHLKP.

Residues 32–55 (MLCHFCKDIFTHLPEFMRHLQWSH) form a C2H2-type 1 zinc finger. Disordered regions lie at residues 78 to 111 (SSED…PGSS), 140 to 161 (EQSY…ARKP), 205 to 239 (NDVS…MPSL), and 339 to 434 (SQQP…SKLE). Residues 84–94 (QSQANSCSSGD) are compositionally biased toward polar residues. Basic and acidic residues predominate over residues 148–161 (PDSRTEGFRCARKP). Polar residues-rich tracts occupy residues 339–352 (SQQP…NNAV) and 364–373 (SLTVISSSPI). C2H2-type zinc fingers lie at residues 649–672 (YFCE…QSVH) and 677–700 (FTCS…KTVH).

Belongs to the Teflon family.

It localises to the nucleus. The protein localises to the chromosome. In terms of biological role, specifically required in males for proper segregation of autosomal bivalents at meiosis I. Expression is required in the male germ line prior to spermatocyte stage S4. May have a role as a bridging molecule maintaining adhesion to hold autosome bivalents together via heterochromatic connections. This chain is Protein teflon, found in Drosophila persimilis (Fruit fly).